The following is a 215-amino-acid chain: Pyrrolidone-carboxylate peptidase (215 aa).

Residues Glu80, Cys143, and His167 contribute to the active site.

Belongs to the peptidase C15 family. As to quaternary structure, homotetramer.

The protein localises to the cytoplasm. The enzyme catalyses Release of an N-terminal pyroglutamyl group from a polypeptide, the second amino acid generally not being Pro.. Removes 5-oxoproline from various penultimate amino acid residues except L-proline. The polypeptide is Pyrrolidone-carboxylate peptidase (Pectobacterium carotovorum subsp. carotovorum (strain PC1)).